Consider the following 181-residue polypeptide: Adenylate kinase (181 aa).

10–15 contacts ATP; sequence GAGKGT. Residues 30–59 are NMP; it reads STGDLFRSNISEGTELGLQAKQYLDAGDLV. AMP-binding positions include T31, R36, 57 to 59, 85 to 88, and Q92; these read DLV and GFPR. An LID region spans residues 126 to 132; that stretch reads GRGRADD. R127 serves as a coordination point for ATP. AMP contacts are provided by R129 and R140. G166 contacts ATP.

Belongs to the adenylate kinase family. As to quaternary structure, monomer.

Its subcellular location is the cytoplasm. The enzyme catalyses AMP + ATP = 2 ADP. It functions in the pathway purine metabolism; AMP biosynthesis via salvage pathway; AMP from ADP: step 1/1. Its function is as follows. Catalyzes the reversible transfer of the terminal phosphate group between ATP and AMP. Plays an important role in cellular energy homeostasis and in adenine nucleotide metabolism. This is Adenylate kinase from Mycobacteroides abscessus (strain ATCC 19977 / DSM 44196 / CCUG 20993 / CIP 104536 / JCM 13569 / NCTC 13031 / TMC 1543 / L948) (Mycobacterium abscessus).